We begin with the raw amino-acid sequence, 806 residues long: Leucine--tRNA ligase (806 aa).

A 'HIGH' region motif is present at residues 38–48 (PYPSGEIHMGH). Positions 572–576 (KMSKS) match the 'KMSKS' region motif. Position 575 (K575) interacts with ATP.

This sequence belongs to the class-I aminoacyl-tRNA synthetase family.

The protein resides in the cytoplasm. It catalyses the reaction tRNA(Leu) + L-leucine + ATP = L-leucyl-tRNA(Leu) + AMP + diphosphate. This chain is Leucine--tRNA ligase, found in Helicobacter pylori (strain ATCC 700392 / 26695) (Campylobacter pylori).